A 125-amino-acid polypeptide reads, in one-letter code: Large ribosomal subunit protein uL22c (125 aa).

Belongs to the universal ribosomal protein uL22 family. Part of the 50S ribosomal subunit.

The protein localises to the plastid. It is found in the chloroplast. Functionally, this protein binds specifically to 23S rRNA. The globular domain of the protein is located near the polypeptide exit tunnel on the outside of the subunit, while an extended beta-hairpin is found that lines the wall of the exit tunnel in the center of the 70S ribosome. The polypeptide is Large ribosomal subunit protein uL22c (rpl22) (Huperzia lucidula (Shining clubmoss)).